A 130-amino-acid chain; its full sequence is Chemotaxis protein CheY-3 (130 aa).

In terms of domain architecture, Response regulatory spans 10–127 (KILIVDDFST…TLKEKLDKIF (118 aa)). The Mg(2+) site is built by Asp15, Asp16, Asp60, and Asn62. Asp60 carries the post-translational modification 4-aspartylphosphate.

In terms of assembly, interacts with FliM. Requires Mg(2+) as cofactor.

It is found in the cytoplasm. Functionally, acts as a response regulator to control chemotaxis. Involved in the transmission of sensory signals from the chemoreceptors to the flagellar motors. Switches the flagellar rotation by binding to the flagellar motor switch protein FliM. In its active (phosphorylated or acetylated) form, exhibits enhanced binding to a switch component, FliM, at the flagellar motor which induces a change from counterclockwise to clockwise flagellar rotation. In Vibrio cholerae serotype O1 (strain ATCC 39315 / El Tor Inaba N16961), this protein is Chemotaxis protein CheY-3.